Here is a 5400-residue protein sequence, read N- to C-terminus: Midasin (5400 aa).

6 AAA-ATPase protomer regions span residues 345–571 (MVSL…HGLP), 656–986 (LLEK…AIKA), 1050–1308 (SYVK…EKVV), 1347–1652 (SMRR…VNMA), 1769–2023 (VLRV…VLRI), and 2074–2347 (IRQN…MMGP). Residues 360–367 (GPSGSGKS), 674–681 (GETGTGKT), 1079–1086 (GPTSSGKT), 1369–1376 (GDTGGGKT), 1786–1793 (GSPGVGKT), and 2095–2102 (GPSSSGKT) contribute to the ATP site. Positions 2435–4569 (IYLSSLGVTD…DGVGAKDVSD (2135 aa)) are linker. 3 coiled-coil regions span residues 2896–2916 (LERL…SEID), 3233–3253 (AMKI…LELN), and 3896–3916 (MEQL…VLKL). Disordered stretches follow at residues 4540 to 4890 (EEDD…SSSN), 4905 to 4929 (TLTD…TKVN), and 4990 to 5069 (QVNT…RMDS). Positions 4576–4612 (QLHGTDKKEEEEKEQDDVLGKNKGIEMSDEFDGKEYS) are enriched in basic and acidic residues. Residues 4613-4631 (VSEDEEEDKEDEGSEDEPL) are compositionally biased toward acidic residues. Composition is skewed to basic and acidic residues over residues 4641 to 4652 (DAEKADEKPWNK) and 4661 to 4687 (MNEK…KDDG). Acidic residues-rich tracts occupy residues 4688 to 4698 (VETADEPEESN) and 4706 to 4721 (GNDE…DTDN). Residues 4722–4732 (LEEKIQTKEEA) show a composition bias toward basic and acidic residues. Acidic residues predominate over residues 4740-4750 (VDNEQIDDDME). Residues 4751–4762 (MDKTEEVEKEDA) are compositionally biased toward basic and acidic residues. Positions 4779 to 4798 (GENDQEETQEPSEENMEAEA) are enriched in acidic residues. Over residues 4799-4810 (EDRCGSPQKEEP) the composition is skewed to basic and acidic residues. Residues 4811–4822 (GNDLEQEPETEP) show a composition bias toward acidic residues. Residues 4823-4834 (IEGKEVMSEDMM) are compositionally biased toward basic and acidic residues. Polar residues-rich tracts occupy residues 4839–4855 (RNDN…NPHG), 4864–4874 (TAPQENLSATD), 4916–4928 (PQNQ…QTKV), and 5030–5040 (SKPSISNSIAE). Residues 5157 to 5164 (MKKVIPYI) carry the Nuclear localization signal motif. The region spanning 5186 to 5387 (QVVIAVDDSR…EALPRTLGDV (202 aa)) is the VWFA domain. Positions 5271–5291 (VVNLLRNMNEMLENLASTRRQ) form a coiled coil.

The protein belongs to the midasin family. In terms of assembly, associates with pre-60S ribosomes in the nucleoplasm. As to expression, constitutively and ubiquitously expressed. Mostly observed in the shoot apex and root tip, and, to a lower extent, in mature seeds, seedling (excluding the hypocotyl), roots, stems, leaves and flowers.

Its subcellular location is the nucleus. The protein localises to the nucleolus. The protein resides in the nucleoplasm. In terms of biological role, nuclear chaperone required for maturation and nuclear export of pre-60S ribosome subunits. Functions at successive maturation steps to remove ribosomal factors at critical transition points, first driving the exit of early pre-60S particles from the nucleolus and then driving late pre-60S particles from the nucleus. Required for female gametophyte development. Involved in the expression regulation of genes related to plant growth and development. The chain is Midasin from Arabidopsis thaliana (Mouse-ear cress).